Reading from the N-terminus, the 293-residue chain is Energy-coupling factor transporter ATP-binding protein EcfA2 (293 aa).

Residues 3-246 (ITFQKVEHRY…ADELEKIGVD (244 aa)) form the ABC transporter domain. 40 to 47 (GHTGSGKS) is a binding site for ATP.

The protein belongs to the ABC transporter superfamily. Energy-coupling factor EcfA family. As to quaternary structure, forms a stable energy-coupling factor (ECF) transporter complex composed of 2 membrane-embedded substrate-binding proteins (S component), 2 ATP-binding proteins (A component) and 2 transmembrane proteins (T component).

The protein localises to the cell membrane. Its function is as follows. ATP-binding (A) component of a common energy-coupling factor (ECF) ABC-transporter complex. Unlike classic ABC transporters this ECF transporter provides the energy necessary to transport a number of different substrates. In Bacillus cereus (strain ZK / E33L), this protein is Energy-coupling factor transporter ATP-binding protein EcfA2.